Reading from the N-terminus, the 453-residue chain is Phosphoglucosamine mutase (453 aa).

Residue Ser110 is the Phosphoserine intermediate of the active site. Mg(2+)-binding residues include Ser110, Asp247, Asp249, and Asp251. Position 110 is a phosphoserine (Ser110).

The protein belongs to the phosphohexose mutase family. Mg(2+) is required as a cofactor. In terms of processing, activated by phosphorylation.

It catalyses the reaction alpha-D-glucosamine 1-phosphate = D-glucosamine 6-phosphate. Functionally, catalyzes the conversion of glucosamine-6-phosphate to glucosamine-1-phosphate. The chain is Phosphoglucosamine mutase from Tropheryma whipplei (strain TW08/27) (Whipple's bacillus).